A 664-amino-acid polypeptide reads, in one-letter code: E3 ubiquitin-protein ligase RNF139 (664 aa).

A2 bears the N-acetylalanine mark. 12 consecutive transmembrane segments (helical) span residues 51 to 71 (IVLQ…VLIL), 85 to 105 (AFLL…HIDF), 125 to 145 (SLWM…VTLL), 154 to 174 (LIIL…PLHI), 178 to 198 (LLFT…AVKL), 293 to 313 (GMSA…LAFI), 323 to 343 (LGFV…LSGL), 356 to 376 (MCLL…PVLM), 390 to 410 (FPVL…SYVL), 420 to 440 (LFAV…SLTV), 469 to 489 (SIIE…TMMF), and 495 to 512 (IRAF…YLQA). Residues 547–586 (CAICYHEFTTSARITPCNHYFHALCLRKWLYIQDTCPMCH) form an RING-type; atypical zinc finger. Residues 601-664 (VSNNNGFIPP…AAEEFNDDTD (64 aa)) are disordered. Over residues 616-628 (EAVREAAAESDRE) the composition is skewed to basic and acidic residues. The segment covering 629 to 639 (LNEDDSTDCDD) has biased composition (acidic residues). S634 carries the phosphoserine modification. 2 positions are modified to phosphothreonine: T635 and T663.

In terms of assembly, interacts with MHC class I and HM13. Interacts with VHL. Component of SCAP-SREBP complex composed of SREBF2, SCAP and RNF139; the complex hampers the interaction between SCAP and SEC24B, thereby reducing SREBF2 proteolytic processing. Interacts with SREBF2 (via C-terminal domain). Interacts with SCAP; the interaction inhibits the interaction of SCAP with SEC24B and hampering the ER to Golgi transport of the SCAP-SREBP complex. Interacts with SEC24B. Interacts with INSIG1 and INSIG2. Interacts with EIF3F and EIF3H; the interaction leads to protein translation inhibitions in a ubiquitination-dependent manner. Interacts with XBP1 isoform 1; the interaction induces ubiquitination and degradation of XBP1 isoform 1. Interacts with AUP1, AMFR and UBE2G2; interaction with AUP1 facilitates interaction of RNF139 with ubiquitin-conjugating enzyme UBE2G2 and ubiquitin ligase AMFR/gp78, leading to sterol-induced ubiquitination of HMGCR and its subsequent proteasomal degradation. In terms of processing, autoubiquitinated. Ubiquitination is induced by sterol and leads to ist degradation via the ubiquitin-proteasome pathway. As to expression, highly expressed in testis, placenta and adrenal gland. Moderate expression in heart, brain, liver, skeletal muscle and pancreas, and low expression in lung and kidney.

The protein resides in the endoplasmic reticulum membrane. It catalyses the reaction S-ubiquitinyl-[E2 ubiquitin-conjugating enzyme]-L-cysteine + [acceptor protein]-L-lysine = [E2 ubiquitin-conjugating enzyme]-L-cysteine + N(6)-ubiquitinyl-[acceptor protein]-L-lysine.. Its pathway is protein modification; protein ubiquitination. Functionally, E3-ubiquitin ligase; acts as a negative regulator of cell proliferation through mechanisms involving G2/M arrest and cell death. Required for MHC class I ubiquitination in cells expressing the cytomegalovirus protein US2 before dislocation from the endoplasmic reticulum (ER). Affects SREBP processing by hindering the SREBP-SCAP complex translocation from the ER to the Golgi, thereby reducing SREBF2 target gene expression. Involved in the sterol-accelerated degradation of HMGCR. This is achieved through binding of RNF139 to INSIG1 and/or INSIG2 at the ER membrane. In addition, interaction of RNF139 with AUP1 facilitates interaction of RNF139 with ubiquitin-conjugating enzyme UBE2G2 and ubiquitin ligase AMFR, leading to ubiquitination of HMGCR. The ubiquitinated HMGCR is then released from the ER into the cytosol for subsequent destruction. Required for INSIG1 ubiquitination. May be required for EIF3 complex ubiquitination. The chain is E3 ubiquitin-protein ligase RNF139 from Homo sapiens (Human).